Here is a 330-residue protein sequence, read N- to C-terminus: Ketol-acid reductoisomerase (NADP(+)) (330 aa).

The KARI N-terminal Rossmann domain maps to 1–181 (MKVFYDSDFK…GLSRAGVIQT (181 aa)). Residues 24–27 (YGSQ), R47, S52, and 82–85 (DELQ) contribute to the NADP(+) site. H107 is an active-site residue. Position 133 (G133) interacts with NADP(+). Residues 182–327 (TFKEETETDL…AKLRKMCGLE (146 aa)) enclose the KARI C-terminal knotted domain. 4 residues coordinate Mg(2+): D190, E194, E226, and E230. Residue S251 coordinates substrate.

Belongs to the ketol-acid reductoisomerase family. Mg(2+) is required as a cofactor.

It carries out the reaction (2R)-2,3-dihydroxy-3-methylbutanoate + NADP(+) = (2S)-2-acetolactate + NADPH + H(+). The catalysed reaction is (2R,3R)-2,3-dihydroxy-3-methylpentanoate + NADP(+) = (S)-2-ethyl-2-hydroxy-3-oxobutanoate + NADPH + H(+). It functions in the pathway amino-acid biosynthesis; L-isoleucine biosynthesis; L-isoleucine from 2-oxobutanoate: step 2/4. The protein operates within amino-acid biosynthesis; L-valine biosynthesis; L-valine from pyruvate: step 2/4. Its function is as follows. Involved in the biosynthesis of branched-chain amino acids (BCAA). Catalyzes an alkyl-migration followed by a ketol-acid reduction of (S)-2-acetolactate (S2AL) to yield (R)-2,3-dihydroxy-isovalerate. In the isomerase reaction, S2AL is rearranged via a Mg-dependent methyl migration to produce 3-hydroxy-3-methyl-2-ketobutyrate (HMKB). In the reductase reaction, this 2-ketoacid undergoes a metal-dependent reduction by NADPH to yield (R)-2,3-dihydroxy-isovalerate. The polypeptide is Ketol-acid reductoisomerase (NADP(+)) (Methanococcus maripaludis (strain C7 / ATCC BAA-1331)).